We begin with the raw amino-acid sequence, 279 residues long: MALKQYNPVTPGMRNLVLVDRSDLYKGKPVKKLTEGLVKTGGRNNHGRVTSWWRGGGNKRRYRLIDFKRTKVDVAGRVERLEYDPNRTAFIALITYEDGEQTYILAPQRLQVGDAVISADRADIKPGNAMPLKNMPVGTIIHNVEMKPGKGGQLARSAGCYAQLIGKDAGYAQLRLSSGELRLVRGECLATVGAVSNPDNQNEKLGKAGRSRWMGRRPHVRGVVMNPVDHPHGGGEGRTSGGRHPVTPWGKPTKGKRTRSNKKTDSLIMRSRHLAKKKR.

Residues 223–279 (VVMNPVDHPHGGGEGRTSGGRHPVTPWGKPTKGKRTRSNKKTDSLIMRSRHLAKKKR) are disordered. Positions 270 to 279 (RSRHLAKKKR) are enriched in basic residues.

It belongs to the universal ribosomal protein uL2 family. In terms of assembly, part of the 50S ribosomal subunit. Forms a bridge to the 30S subunit in the 70S ribosome.

One of the primary rRNA binding proteins. Required for association of the 30S and 50S subunits to form the 70S ribosome, for tRNA binding and peptide bond formation. It has been suggested to have peptidyltransferase activity; this is somewhat controversial. Makes several contacts with the 16S rRNA in the 70S ribosome. In Rhodospirillum rubrum (strain ATCC 11170 / ATH 1.1.1 / DSM 467 / LMG 4362 / NCIMB 8255 / S1), this protein is Large ribosomal subunit protein uL2.